The sequence spans 295 residues: Nucleotide-binding protein Sare_3328 (295 aa).

19–26 provides a ligand contact to ATP; it reads GVSGGGRS. 70–73 is a GTP binding site; sequence DVRS.

Belongs to the RapZ-like family.

Its function is as follows. Displays ATPase and GTPase activities. The chain is Nucleotide-binding protein Sare_3328 from Salinispora arenicola (strain CNS-205).